A 128-amino-acid chain; its full sequence is Head peptide (128 aa).

A signal peptide spans 1–22 (MWKFASIVVLVVCLAWAVYCED). The residue at position 23 (Gln-23) is a Pyrrolidone carboxylic acid. At Pro-26 the chain carries Hydroxyproline; partial. Residues 27-128 (SLKTRFGRSA…GRANKKRAAN (102 aa)) are disordered. Phe-32 carries the post-translational modification Phenylalanine amide. A propeptide spanning residues 35–55 (SADEPESDNYVSNDIMEKRSA) is cleaved from the precursor. At Gln-56 the chain carries Pyrrolidone carboxylic acid. Pro-59 is modified (hydroxyproline; partial). Residue Phe-65 is modified to Phenylalanine amide. Residues 66 to 78 (GRSEGAEVMEKRS) show a composition bias toward basic and acidic residues. Residues 68-79 (SEGAEVMEKRSA) constitute a propeptide that is removed on maturation. Gln-80 carries the pyrrolidone carboxylic acid modification. Pro-83 bears the Hydroxyproline; partial mark. The residue at position 89 (Phe-89) is a Phenylalanine amide. The propeptide occupies 92-128 (SVANPESDGYMRKRSAESEPFVTRIRHGRANKKRAAN). Positions 115–128 (RIRHGRANKKRAAN) are enriched in basic residues.

The protein belongs to the NPY family. In terms of tissue distribution, expressed in the brain, terminal ganglion, and midgut of adults: numerous neurosecretory cells and midgut endocrine cells. Expression is dynamic depending on reproductive cycle.

The protein localises to the secreted. Has a role in inhibiting host-seeking behavior during a reproductive cycle. The chain is Head peptide from Aedes aegypti (Yellowfever mosquito).